Reading from the N-terminus, the 73-residue chain is Homeodomain-only protein (73 aa).

The segment at residues 3–62 (TETASGPTEDQVEILEYNFNKVNKHPDPTTLCLIAAEAGLSEEETQKWFKQRLAQWRRSE) is a DNA-binding region (homeobox; degenerate).

As to quaternary structure, interacts with serum response factor (SRF). Component of a large complex containing histone deacetylases such as HDAC2. Interacts with the acetylated forms of HSPA1A and HSPA1B. Interacts with HSPA8.

Its subcellular location is the nucleus. It localises to the cytoplasm. In terms of biological role, atypical homeodomain protein which does not bind DNA and is required to modulate cardiac growth and development. Acts via its interaction with SRF, thereby modulating the expression of SRF-dependent cardiac-specific genes and cardiac development. Prevents SRF-dependent transcription either by inhibiting SRF binding to DNA or by recruiting histone deacetylase (HDAC) proteins that prevent transcription by SRF. Overexpression causes cardiac hypertrophy. Acts as a co-chaperone for HSPA1A and HSPA1B chaperone proteins and assists in chaperone-mediated protein refolding. The polypeptide is Homeodomain-only protein (HOPX) (Bos taurus (Bovine)).